Consider the following 691-residue polypeptide: DNA-directed RNA polymerase subunit beta' (691 aa).

Zn(2+) contacts are provided by C69, C71, C87, and C90. Positions 489, 491, and 493 each coordinate Mg(2+).

This sequence belongs to the RNA polymerase beta' chain family. RpoC1 subfamily. In plastids the minimal PEP RNA polymerase catalytic core is composed of four subunits: alpha, beta, beta', and beta''. When a (nuclear-encoded) sigma factor is associated with the core the holoenzyme is formed, which can initiate transcription. Requires Mg(2+) as cofactor. The cofactor is Zn(2+).

It localises to the plastid. It is found in the chloroplast. It catalyses the reaction RNA(n) + a ribonucleoside 5'-triphosphate = RNA(n+1) + diphosphate. Its function is as follows. DNA-dependent RNA polymerase catalyzes the transcription of DNA into RNA using the four ribonucleoside triphosphates as substrates. In Jasminum nudiflorum (Winter jasmine), this protein is DNA-directed RNA polymerase subunit beta'.